A 2554-amino-acid chain; its full sequence is Protein sevenless (2554 aa).

Positions 1–10 are enriched in polar residues; the sequence is MTMFWQQNVD. The segment at 1–25 is disordered; that stretch reads MTMFWQQNVDHQSDEQDKQAKGAAP. Residues 1–2123 are Extracellular-facing; that stretch reads MTMFWQQNVD…AEPFVSPEKR (2123 aa). Basic and acidic residues predominate over residues 11–20; that stretch reads HQSDEQDKQA. N-linked (GlcNAc...) asparagine glycosylation is present at Asn30. The span at 51 to 70 shows a compositional bias: low complexity; that stretch reads NQQAPGTSSSSSNSQNASPS. The interval 51-75 is disordered; that stretch reads NQQAPGTSSSSSNSQNASPSKIVVR. Asn129 is a glycosylation site (N-linked (GlcNAc...) asparagine). Residues 181 to 208 form a disordered region; sequence SRPQSTMAHHPDDRDRDRDPSEEQHGVD. Residues 189–208 are compositionally biased toward basic and acidic residues; sequence HHPDDRDRDRDPSEEQHGVD. The region spanning 440–533 is the Fibronectin type-III 1 domain; it reads APVIEHLMGL…GFVQTHSARN (94 aa). N-linked (GlcNAc...) asparagine glycans are attached at residues Asn481, Asn505, Asn617, and Asn647. Positions 824–924 constitute a Fibronectin type-III 2 domain; that stretch reads AGGKPHSLKA…EPLAARTWPL (101 aa). Asn966 carries an N-linked (GlcNAc...) asparagine glycan. One copy of the LDL-receptor class B repeat lies at 1010-1053; sequence GRVYWTDLARNCVVRMDPWSGSRELLPVFEANFLALDPRQGHLY. 2 consecutive Fibronectin type-III domains span residues 1202–1290 and 1294–1397; these read LPDS…TPPV and QPRR…VAPE. N-linked (GlcNAc...) asparagine glycans are attached at residues Asn1228, Asn1313, Asn1353, Asn1550, Asn1557, Asn1639, Asn1725, Asn1756, Asn1804, Asn1889, Asn1947, and Asn2073. Fibronectin type-III domains lie at 1801–1901, 1902–1988, and 1995–2117; these read PPRN…SFAE, LPEL…VYET, and QPGK…AEPF. A helical membrane pass occupies residues 2124-2147; it reads GSLVLAIIAPAAIVSSCVLALVLV. Topologically, residues 2148–2554 are cytoplasmic; sequence RKVQKRRLRA…LYANEGVSRL (407 aa). Residues 2209–2485 form the Protein kinase domain; the sequence is LKLLRFLGSG…RCYNTLHAIS (277 aa). Residues 2215-2223 and Lys2242 contribute to the ATP site; that span reads LGSGAFGEV. Asp2343 functions as the Proton acceptor in the catalytic mechanism. The residue at position 2380 (Tyr2380) is a Phosphotyrosine; by autocatalysis. Residues 2515–2527 show a composition bias toward basic and acidic residues; it reads GQPLEEHREHNER. The tract at residues 2515 to 2534 is disordered; that stretch reads GQPLEEHREHNERPEDENLT.

It belongs to the protein kinase superfamily. Tyr protein kinase family. Insulin receptor subfamily. As to quaternary structure, may form a complex with drk and Sos. Binds the phosphotyrosine interaction domain (PID) of Dab.

It is found in the cell membrane. The catalysed reaction is L-tyrosyl-[protein] + ATP = O-phospho-L-tyrosyl-[protein] + ADP + H(+). Receptor for an extracellular signal required to instruct a cell to differentiate into an R7 photoreceptor. The ligand for sev is the boss (bride of sevenless) protein on the surface of the neighboring R8 cell. The polypeptide is Protein sevenless (sev) (Drosophila melanogaster (Fruit fly)).